The primary structure comprises 455 residues: Tubulin alpha-1 chain (455 aa).

GTP contacts are provided by Gln11, Glu75, Ser144, Gly148, Thr149, Thr183, Asn210, and Asn232. Position 75 (Glu75) interacts with Mg(2+). Residue Glu258 is part of the active site.

It belongs to the tubulin family. In terms of assembly, dimer of alpha and beta chains. A typical microtubule is a hollow water-filled tube with an outer diameter of 25 nm and an inner diameter of 15 nM. Alpha-beta heterodimers associate head-to-tail to form protofilaments running lengthwise along the microtubule wall with the beta-tubulin subunit facing the microtubule plus end conferring a structural polarity. Microtubules usually have 13 protofilaments but different protofilament numbers can be found in some organisms and specialized cells. Mg(2+) is required as a cofactor.

It is found in the cytoplasm. It localises to the cytoskeleton. The enzyme catalyses GTP + H2O = GDP + phosphate + H(+). Functionally, tubulin is the major constituent of microtubules, a cylinder consisting of laterally associated linear protofilaments composed of alpha- and beta-tubulin heterodimers. Microtubules grow by the addition of GTP-tubulin dimers to the microtubule end, where a stabilizing cap forms. Below the cap, tubulin dimers are in GDP-bound state, owing to GTPase activity of alpha-tubulin. This Schizosaccharomyces pombe (strain 972 / ATCC 24843) (Fission yeast) protein is Tubulin alpha-1 chain (nda2).